Reading from the N-terminus, the 229-residue chain is Lytic polysaccharide monooxygenase-like protein ham-7 (229 aa).

Residues 1 to 17 form the signal peptide; the sequence is MLTSTLLALASAALASA. Residue histidine 18 participates in Cu(2+) binding. 2 disulfide bridges follow: cysteine 47/cysteine 157 and cysteine 122/cysteine 178. Residues asparagine 55, asparagine 98, asparagine 139, asparagine 174, and asparagine 180 are each glycosylated (N-linked (GlcNAc...) asparagine). The GPI-anchor amidated serine moiety is linked to residue serine 206. The propeptide at 207 to 229 is removed in mature form; sequence AAASLARMAGWVPLVAGGLWLML.

It belongs to the X325 family. It depends on Cu(2+) as a cofactor.

The protein resides in the cell membrane. Lytic polysaccharide monooxygenase-like protein that has diverged to biological functions other than polysaccharide degradation since it does not perform oxidative cleavage of polysaccharides. Acts as the major cell wall sensor that regulates MAK-1-dependent hyphal anastomosis, the fusion of hyphal cells. May also act as a cell surface-bound protein that functions in the copper-accumulation pathway. This Neurospora crassa (strain ATCC 24698 / 74-OR23-1A / CBS 708.71 / DSM 1257 / FGSC 987) protein is Lytic polysaccharide monooxygenase-like protein ham-7.